Consider the following 452-residue polypeptide: tRNA modification GTPase MnmE (452 aa).

Positions 21, 78, and 118 each coordinate (6S)-5-formyl-5,6,7,8-tetrahydrofolate. The region spanning 214 to 375 (GMKVVIAGRP…LREHLKQAMG (162 aa)) is the TrmE-type G domain. A K(+)-binding site is contributed by Asn224. GTP contacts are provided by residues 224–229 (NAGKSS), 243–249 (TDIAGTT), and 268–271 (DTAG). Residue Ser228 coordinates Mg(2+). Positions 243, 245, and 248 each coordinate K(+). Thr249 contributes to the Mg(2+) binding site. Lys452 serves as a coordination point for (6S)-5-formyl-5,6,7,8-tetrahydrofolate.

The protein belongs to the TRAFAC class TrmE-Era-EngA-EngB-Septin-like GTPase superfamily. TrmE GTPase family. As to quaternary structure, homodimer. Heterotetramer of two MnmE and two MnmG subunits. K(+) serves as cofactor.

Its subcellular location is the cytoplasm. Exhibits a very high intrinsic GTPase hydrolysis rate. Involved in the addition of a carboxymethylaminomethyl (cmnm) group at the wobble position (U34) of certain tRNAs, forming tRNA-cmnm(5)s(2)U34. The protein is tRNA modification GTPase MnmE of Haemophilus influenzae (strain PittGG).